Reading from the N-terminus, the 127-residue chain is uncharacterized protein (127 aa).

This is an uncharacterized protein from Homo sapiens (Human).